The sequence spans 358 residues: Heme A synthase 1 (358 aa).

5 consecutive transmembrane segments (helical) span residues 11–31 (LVGT…VGGG), 98–117 (WGRL…RLRG), 123–143 (LTAW…MGWY), 159–179 (LYLG…LWTA), and 199–219 (LLSV…LVAA). Residue His262 participates in heme binding. 3 helical membrane-spanning segments follow: residues 264-284 (VAAT…LRAP), 292-312 (LFLL…STLV), and 315-335 (MAEL…ACIA). His322 is a binding site for heme.

Belongs to the COX15/CtaA family. Type 2 subfamily. Interacts with CtaB. The cofactor is heme b.

Its subcellular location is the cell membrane. It catalyses the reaction Fe(II)-heme o + 2 A + H2O = Fe(II)-heme a + 2 AH2. The protein operates within porphyrin-containing compound metabolism; heme A biosynthesis; heme A from heme O: step 1/1. Functionally, catalyzes the conversion of heme O to heme A by two successive hydroxylations of the methyl group at C8. The first hydroxylation forms heme I, the second hydroxylation results in an unstable dihydroxymethyl group, which spontaneously dehydrates, resulting in the formyl group of heme A. The chain is Heme A synthase 1 from Acidiphilium cryptum (strain JF-5).